Here is a 205-residue protein sequence, read N- to C-terminus: Shieldin complex subunit 1 (205 aa).

As to quaternary structure, component of the shieldin complex, consisting of SHLD1, SHLD2, SHLD3 and MAD2L2/REV7. Within the complex, SHLD2 forms a scaffold which interacts with a SHLD3-MAD2L2 subcomplex via its N-terminus, and with SHLD1 via its C-terminus. Interacts with ASTE1.

The protein localises to the chromosome. In terms of biological role, component of the shieldin complex, which plays an important role in repair of DNA double-stranded breaks (DSBs). During G1 and S phase of the cell cycle, the complex functions downstream of TP53BP1 to promote non-homologous end joining (NHEJ) and suppress DNA end resection. Mediates various NHEJ-dependent processes including immunoglobulin class-switch recombination, and fusion of unprotected telomeres. The polypeptide is Shieldin complex subunit 1 (Homo sapiens (Human)).